A 147-amino-acid chain; its full sequence is Deoxyuridine 5'-triphosphate nucleotidohydrolase (147 aa).

Substrate contacts are provided by residues 68 to 70 (RSG), Asn-81, and 85 to 87 (TID).

The protein belongs to the dUTPase family. Mg(2+) is required as a cofactor.

The catalysed reaction is dUTP + H2O = dUMP + diphosphate + H(+). Its pathway is pyrimidine metabolism; dUMP biosynthesis; dUMP from dCTP (dUTP route): step 2/2. This enzyme is involved in nucleotide metabolism: it produces dUMP, the immediate precursor of thymidine nucleotides and it decreases the intracellular concentration of dUTP so that uracil cannot be incorporated into DNA. The polypeptide is Deoxyuridine 5'-triphosphate nucleotidohydrolase (Solibacter usitatus (strain Ellin6076)).